Consider the following 287-residue polypeptide: 33 kDa chaperonin (287 aa).

2 disulfides stabilise this stretch: cysteine 233–cysteine 235 and cysteine 266–cysteine 269.

This sequence belongs to the HSP33 family. In terms of processing, under oxidizing conditions two disulfide bonds are formed involving the reactive cysteines. Under reducing conditions zinc is bound to the reactive cysteines and the protein is inactive.

Its subcellular location is the cytoplasm. Functionally, redox regulated molecular chaperone. Protects both thermally unfolding and oxidatively damaged proteins from irreversible aggregation. Plays an important role in the bacterial defense system toward oxidative stress. This chain is 33 kDa chaperonin, found in Thermodesulfovibrio yellowstonii (strain ATCC 51303 / DSM 11347 / YP87).